A 158-amino-acid polypeptide reads, in one-letter code: Cyclic pyranopterin monophosphate synthase (158 aa).

Substrate contacts are provided by residues 76 to 78 (MCH) and 114 to 115 (ME). Residue D129 is part of the active site.

Belongs to the MoaC family. Homohexamer; trimer of dimers.

The catalysed reaction is (8S)-3',8-cyclo-7,8-dihydroguanosine 5'-triphosphate = cyclic pyranopterin phosphate + diphosphate. It participates in cofactor biosynthesis; molybdopterin biosynthesis. Functionally, catalyzes the conversion of (8S)-3',8-cyclo-7,8-dihydroguanosine 5'-triphosphate to cyclic pyranopterin monophosphate (cPMP). This Clostridium perfringens (strain SM101 / Type A) protein is Cyclic pyranopterin monophosphate synthase.